A 770-amino-acid polypeptide reads, in one-letter code: Conserved oligomeric Golgi complex subunit 7 (770 aa).

Belongs to the COG7 family. As to quaternary structure, component of the conserved oligomeric Golgi complex which is composed of eight different subunits and is required for normal Golgi morphology and localization.

The protein localises to the golgi apparatus membrane. In terms of biological role, required for normal Golgi function. This chain is Conserved oligomeric Golgi complex subunit 7 (COG7), found in Homo sapiens (Human).